Reading from the N-terminus, the 263-residue chain is Regulatory protein RecX (263 aa).

It belongs to the RecX family.

The protein localises to the cytoplasm. In terms of biological role, modulates RecA activity. This is Regulatory protein RecX from Bacillus licheniformis (strain ATCC 14580 / DSM 13 / JCM 2505 / CCUG 7422 / NBRC 12200 / NCIMB 9375 / NCTC 10341 / NRRL NRS-1264 / Gibson 46).